Here is a 306-residue protein sequence, read N- to C-terminus: Pantothenate kinase (306 aa).

Position 91–98 (Gly-91–Ser-98) interacts with ATP.

The protein belongs to the prokaryotic pantothenate kinase family.

It localises to the cytoplasm. The enzyme catalyses (R)-pantothenate + ATP = (R)-4'-phosphopantothenate + ADP + H(+). It functions in the pathway cofactor biosynthesis; coenzyme A biosynthesis; CoA from (R)-pantothenate: step 1/5. The protein is Pantothenate kinase of Streptococcus pneumoniae (strain Hungary19A-6).